A 192-amino-acid polypeptide reads, in one-letter code: MKNLCGIDEAGRGPLAGPLVVAGVILLEDIVGLNDSKVLSEKKREKLFDEIKEKSKYHIVFSDAKLIDEKGISFCLKSSILEIIENLKEFSNSFLMDGNTNFGIQILQKEIKADAKYAQVSAASILAKVSRDRFMDEISPLYPKYDFHKHKGYGTKAHIEAIKEFGRSDIHRHTFKLKALGENEIGVQKSLF.

The RNase H type-2 domain maps to 2 to 187; it reads KNLCGIDEAG…KALGENEIGV (186 aa). Residues Asp8, Glu9, and Asp97 each coordinate a divalent metal cation.

The protein belongs to the RNase HII family. Mn(2+) serves as cofactor. It depends on Mg(2+) as a cofactor.

It localises to the cytoplasm. It carries out the reaction Endonucleolytic cleavage to 5'-phosphomonoester.. Functionally, endonuclease that specifically degrades the RNA of RNA-DNA hybrids. The polypeptide is Ribonuclease HII (Aliarcobacter butzleri (strain RM4018) (Arcobacter butzleri)).